The chain runs to 94 residues: Neurotoxin LmNaTx45.2 (94 aa).

A signal peptide spans 1–18; sequence MKLAILSLFLVFQIGVES. The region spanning 20–86 is the LCN-type CS-alpha/beta domain; it reads KNGFALDHYG…IGDSRKNYCD (67 aa). Disulfide bonds link cysteine 34–cysteine 85, cysteine 44–cysteine 63, cysteine 48–cysteine 65, and cysteine 59–cysteine 85.

Belongs to the long (4 C-C) scorpion toxin superfamily. Sodium channel inhibitor family. Beta subfamily. Expressed by the venom gland.

The protein resides in the secreted. Binds voltage-independently at site-4 of sodium channels (Nav) and shift the voltage of activation toward more negative potentials thereby affecting sodium channel activation and promoting spontaneous and repetitive firing. The protein is Neurotoxin LmNaTx45.2 of Lychas mucronatus (Chinese swimming scorpion).